A 529-amino-acid chain; its full sequence is Lysine--tRNA ligase (529 aa).

A 'HIGH' region motif is present at residues 44–52 (PSGLPHIGT). The short motif at 290–294 (KISKS) is the 'KMSKS' region element. Position 293 (K293) interacts with ATP.

The protein belongs to the class-I aminoacyl-tRNA synthetase family.

The protein localises to the cytoplasm. The enzyme catalyses tRNA(Lys) + L-lysine + ATP = L-lysyl-tRNA(Lys) + AMP + diphosphate. The protein is Lysine--tRNA ligase of Rickettsia akari (strain Hartford).